The sequence spans 4010 residues: MGVLKAWLGVALALAEFAVLPNCEGACLYQGSFLADATIWKPDSCQNCRCHGDIVICKPVVCKNPRCAFEKGEVLWIAPNQCCPQCAPRTPGSCHHEGKIHEHGTEWASAPCTVCSCTHGEVRCSHQQCTPLSCGPQELEFLAEGRCCPICVGTGKPCSYDGHVFQDGEDWQLSRCAKCVCRNGLTQCFAAQCQPLFCNQDEIVVRVPGKCCSQCSARSCSTAGQVYEHGEQWKEDACTLCMCDQGQVRCHKQVCPPLRCAKGQGRARHHGQCCEECATPDRSCSSGGVLRYQDEMWKGSACEFCMCDQGQVTCQTGECAKVACALGEELVHLEGKCCPECISRNGYCIYEQKAETMSSSAREIKHVPDGEKWEEGPCKLCECREAQVTCYEPSCPPCPVATLALVVKGQCCPDCTPVHCHPDCLTCSHSPDHCDLCQDPTKLLQNGRCVHSCGLGFYQAGSLCLACQPQCSTCTNGLECSSCLPPLLMQQGQCVSTCGDGFYQDHHSCAVCHESCAGCWGPTEKHCMACRDPLQVLRDSSCENTCGNGFYNRQGTCVACDQSCKSCGPSSPRCLSCAEKTILHDGKCISECPHGYYADSTGSCKVCHSSCASCSGPTAAHCIACIHPQTLRQGHCLPSCGEGFYPDHGICEACHASCHTCVGPQPSHCTQCKKPEAGLLVEQHSGENVPYGKCVSRCGTHFYLESTGLCEVCHPSCLTCEGKSPHNCTGCESTHALLAGCCVSQCPETHFNLEGTCTECHPSCRQCHGPLESDCVSCHPHLTLTSGHCKTSCKEEQFLNLVGYCADCHPLCQHCVANLQDTGSICLKCQHARHLLLGDHCVPECPPGHYKERGTCKTCHSSCRSCQNGGPFSCSSCDTGLVLTHIGTCSTACFPGHYLDDNQVCQPCNRHCRSCDSQGSCTSCRDPSKVLLFGECQYESCTPQYYLDIATKTCKECDWSCNACTGPLRTDCLQCMDGYVLQDGVCVEQCSPQHYRDSGSCKRCDSHCVECQGPHECTRCEEPFLLFQAQCVQECGKGYFADHAKHRCIACPQGCLRCSHKDRCHLCDHSFFLKSGLCMPTCVPGFSGHSSNENCTDKMYTPSLHVNGSLTLGIGSMKPLDFSLLNIQHQDGRVEDLLFHVVSTPTNGQLLLSRNGKEVQLEKAGHFSWKDVNEKKVRFVHSKEKLRKGYFSLKISDQQFFSEPQLINIQAFSTQAPYVLRNEVLHVSKGERATITTQLLDIRDDDNPQDVVVNVLDPPLHGQLLQMPPAPAASIYQFHLDELSRGLLLYAHDGSDSTSDIIVFQANDGHSFQNILFHVKNIPKNDRALRLVTNSMVWVPEGGMLKITNRILKAQAPGVRADDIIYKITHSRPQFGEVVLLMNLPADSPAGPAEEGHHLPDGRMATPISTFTQQDIDDGVVWYRHLGAPTQSDSFRFQVSSATSAQEHLESHMFNIAILPQAPEAPKLSLGTSLHMTAREDGLSVIQPQSLSFVKAESPSGKIIYNITVPLHPNQGIIEHRDRPHSPIQYFTQEDINQGQIMYRPPVAPPHLQEIMAFSFAGLPESVKFYFTVSDGQHTSPEMALTIHLLHSDLQPPAFQVKAPLLEVSPGGRTSLGLQLLVRDAQVVPEELFFQLQKSPQHGMLVKYTAKSSVTMAAGDTFTYDEVERNVLQYVHDGSSAWEDSLEISVTDGLTVTTSEVKVEVSPSENRGPRLAPGSSLSMTVASQHTAIITRSHLAYVDDSSSDPEIWIRLSSLPLYGVLFRSSGPDMDELSGDSNFTMEDINKKNIRYSAVFETDGHSVTDGFHFSVSDMDGNHVDNQVFTITVTPAENPPHIIAFADLITVDEGGRAPLSLHHFFATEDQDNLQDDAVIKLSALPKYGCIENTGTGDRFGPGANSELEASFPIQDVLENYIYYFQSVHESIEPTHDVFSFYVSDGSGRSEIHSINITIERKNDEPPRMTLRPLGVRLSSGVAISNSSLSLQDLDTPDNELIFVLMKKPDHGHLLRRSTASDPLENGTVLDQGSSFTYQDVLAGLVGYLPGDIYMAVDEFRFSLTDGLHVDTGRMEIYIELPSTNIPHLAINRGLQLSAGSVARITEQHLKATDTDSEAGQVVYIMKEDPGAGRLLMAKADNLEQISVRGPIRSFTQADVSQGQIEYSHGPGEPGGSFAFKFDVVDGEGNKLADQSFSIGVLEDKSPPVVITNRGLVLDENSVEKITTAQLSATDQDSKPTELIYRITTQPQLGHLEHVASPGIQISSFTQADLASRNVQYVRSSGTGKQSDAFSFVLSDGLHEVTQTFPITIHPVDDARPLVQNRGMRVQEGVRKTITEFELKAVDVDTEAESITFTIVQPPRHGTIERTARGQRFHQTSSFTMEDIYQNRVSYSHDGSNSLKDRFTFTVSDGTNPFFIIEEGGEEIMTAAPQQFHVDILPVDDGTPRIVTNLGLQWLEYMDGKATNLITKKELLTVDPDTEDSQLIYEVTTGPMHGYLENKLQPGRAAATFTQEHVNLGLIRYVLYEEKIQKVMDSFQFLVKDSKPNVVSDNVFHIQWSLISFKYTSYNVSEKAGSVSVTVQRTGNLNQYAIVLCRTEQGTASSSSHPGQQDYMEYAGQVQFDEGEGTKSCTVIINDDDVFENIESFTVGLSMPAYALLGEFTQAKVVINDTEDEPTLEFDKKTYRVNESAGFLFAPIKRQGDSSSTVSAVCYTVPKSAMGSSLYALESGSDFKSRGRSAESRVIFGPGVTVSTCDVMVIDDSEYEEEEEFEIALADASNNARIGRQAVAKVLISGPNDASTVSLGNTAFTISEDAGTVKIPVIRHGTDLSTFTSVWCATRPSDPASATPGVDYVPSSRKVEFGPGITEQYCTLTILDDTQYPVIEGLETFVVFLSSAQGAELTKPSQAVIAINDTFQDVPSMQFSKDLLLVKEKEGVLHIPIIRSGDLSYESSVRCYTQGHSAQVMEDFEERRNADSSRITFLKGQKTKNCTVYIHDDSMFEPEEQFRVYLGHPLGNHWSGARIGKNSVATVTISNDEDAPTIEFEEAAYQVREPAGPEAIAVLSIKVIRRGDQNRTSKIRCSTRDGSAQSGVDYYPKSRVLKFSPGVDHIFFKVEILSNEDREWHESFSLVLGPDDLVEAVLGDVTTATVTILDQEAAGSLILPAPPIVVTLADYDHVEELAKEGVKKAPSPGYPLVCVTPCDPRYPRYAVMKERCSEAGINQTSVQFSWEVAAPTDGNGARSPFETITDNTPFTSVNHKVLDSIYFSRRFHVRCVAKAVDKVGHVGTPLRSNVVTIGTDSAICHTPVVAGTARGFQAQSFIATLKYLDVKHKEHPNRIHISVQIPHQDGMLPLISTMPLHNLHFLLSESIYRHQHVCSNLVTAQDLRGLAEAGFLNDAGFHSTALGPGYDRPFQFDSSVREPKTIQLYRHLNLKSCVWTFDAYYDMTELIDVCGGSVTADFQVRDSAQSFLTVHVPLYVSYIYVTAPRGWASLEHHTEMEFSFFYDTVLWRTGIQTDSVLSARLQIIRIYIREDGRLVIEFKTHAKFRGQFVIEHHTLPDVKSFILTPDHLGGIQFDLQLLWSAQTFDSPHQLWRATSSYNRKDYSGEYTIYLIPCTVQPTQPWVDPGEKALACTAHAPERFLIPIAFQQTNRPVPVVYSLNTEFQLCNNEKVFLMDPNTSDMSLAEMDYKGAFSKGQILYGRVLWNPEQNLHSAYKLQLEKVYLCTGKDGYVPFFDPTGTIYNEGPQYGCIQPNKHLKHRFLLLDRSQPEVTDKYFHDVPFEAHFASELPDFQVVSSMPGVDGFTLKVDALYKVEAGHQWYLQVIYIIGPDSTSRPRVQRSLTVSLRRHQRDLVDPSGWLSLDDSLIYDNEGDQVKNGTNMKSLNLEMQEPVIAASLSQTGASIGSALAAIMLLLLLFLVACFVTRKCQKQKKKQPPEDTLEEYPLNTKVDVAKRNADKVEKNANRQYCTVRNVNILSDNEGYYTFKGAKVKKLNLEVRVHNNLQDGTEV.

The signal sequence occupies residues Met-1–Gly-25. 5 VWFC domains span residues Ala-26 to Ala-87, Gly-92 to Val-152, Lys-156 to Ser-216, Arg-218 to Ala-278, and Arg-282 to Ile-342. Residues Ala-26 to Ser-3903 are Extracellular-facing. Residue Ser-343 is modified to Phosphoserine. The VWFC 6 domain maps to Ser-358 to Thr-416. FU repeat units lie at residues Lys-408–Gln-459, Gly-461–Gln-504, His-506–Asn-552, Gln-554–Ala-598, Thr-601–Pro-646, His-648–Leu-704, Thr-707–Asn-752, Glu-754–Leu-799, Val-802–Lys-851, Arg-853–Leu-899, Asn-902–Leu-947, Thr-951–Arg-996, Ser-998–Ala-1041, and Lys-1045–Gly-1088. Asn-727 is a glycosylation site (N-linked (GlcNAc...) asparagine). Residues Asn-1094 and Asn-1107 are each glycosylated (N-linked (GlcNAc...) asparagine). 7 CSPG repeats span residues Thr-1101 to Ser-1196, Ala-1216 to Asn-1307, Ala-1328 to Ser-1440, Ala-1465 to Ala-1561, Pro-1597 to Thr-1691, Gly-1712 to Ser-1812, and Pro-1834 to Ser-1938. An N-linked (GlcNAc...) asparagine glycan is attached at Asn-1506. N-linked (GlcNAc...) asparagine glycosylation occurs at Asn-1779. Asn-1950 and Asn-1980 each carry an N-linked (GlcNAc...) asparagine glycan. CSPG repeat units follow at residues Glu-1959 to Thr-2059, Ile-2080 to Val-2179, Pro-2201 to Ser-2293, Ala-2313 to Ser-2406, and Thr-2441 to Lys-2538. 5 consecutive Calx-beta domains span residues Val-2545–Ser-2648, Ala-2661–Ala-2772, Ala-2786–Ser-2892, Ile-2907–Gly-3009, and Ala-3027–Gly-3131. 3 N-linked (GlcNAc...) asparagine glycosylation sites follow: Asn-2565, Asn-2666, and Asn-2684. N-linked (GlcNAc...) asparagine glycans are attached at residues Asn-2910, Asn-2987, Asn-3072, Asn-3220, Asn-3678, and Asn-3877. Residues Ile-3904–Val-3924 traverse the membrane as a helical segment. Residues Thr-3925 to Val-4010 lie on the Cytoplasmic side of the membrane.

This sequence belongs to the FRAS1 family.

Its subcellular location is the cell membrane. Its function is as follows. Involved in extracellular matrix organization. Required for the regulation of epidermal-basement membrane adhesion responsible for proper organogenesis during embryonic development. Involved in brain organization and function. This chain is Extracellular matrix organizing protein FRAS1, found in Mus musculus (Mouse).